Here is a 382-residue protein sequence, read N- to C-terminus: Chorismate synthase (382 aa).

The NADP(+) site is built by Arg-39 and Arg-45. FMN is bound by residues 128-130 (RAS), 246-247 (QA), Ala-290, 305-309 (KPIAT), and Arg-331.

The protein belongs to the chorismate synthase family. Homotetramer. FMNH2 serves as cofactor.

The catalysed reaction is 5-O-(1-carboxyvinyl)-3-phosphoshikimate = chorismate + phosphate. It functions in the pathway metabolic intermediate biosynthesis; chorismate biosynthesis; chorismate from D-erythrose 4-phosphate and phosphoenolpyruvate: step 7/7. Catalyzes the anti-1,4-elimination of the C-3 phosphate and the C-6 proR hydrogen from 5-enolpyruvylshikimate-3-phosphate (EPSP) to yield chorismate, which is the branch point compound that serves as the starting substrate for the three terminal pathways of aromatic amino acid biosynthesis. This reaction introduces a second double bond into the aromatic ring system. This Deinococcus geothermalis (strain DSM 11300 / CIP 105573 / AG-3a) protein is Chorismate synthase.